The following is a 218-amino-acid chain: Small ribosomal subunit protein uS3c (218 aa).

In terms of domain architecture, KH type-2 spans 47 to 118; the sequence is VRKHIKSSSN…KLRMALTEVE (72 aa).

Belongs to the universal ribosomal protein uS3 family. In terms of assembly, part of the 30S ribosomal subunit.

It is found in the plastid. The protein resides in the chloroplast. The chain is Small ribosomal subunit protein uS3c (rps3) from Anthoceros angustus (Hornwort).